A 242-amino-acid chain; its full sequence is Cysteine desulfuration protein SufE (242 aa).

C148 (cysteine persulfide intermediate) is an active-site residue.

It belongs to the SufE family. As to quaternary structure, monomer. Interacts with SufS; interaction enhances cysteine desulfurase activity of SufS.

It localises to the plastid. The protein resides in the apicoplast. It participates in cofactor biosynthesis; iron-sulfur cluster biosynthesis. Functionally, participates in sulfur mobilization (SUF) pathway for iron-sulfur (Fe-S) cluster biogenesis. Enhances cysteine desulfurase activity of SufS. Probably functions as a sulfur acceptor for SufS. The polypeptide is Cysteine desulfuration protein SufE (Plasmodium vivax).